A 574-amino-acid chain; its full sequence is uncharacterized protein (574 aa).

The segment at 297 to 317 is disordered; sequence SAASKPRKRKKDEVSGAQVNS.

This is an uncharacterized protein from Mus musculus (Mouse).